The following is a 64-amino-acid chain: Large ribosomal subunit protein bL35 (64 aa).

The protein belongs to the bacterial ribosomal protein bL35 family.

The protein is Large ribosomal subunit protein bL35 of Ureaplasma parvum serovar 3 (strain ATCC 27815 / 27 / NCTC 11736).